A 209-amino-acid chain; its full sequence is Ribosomal RNA large subunit methyltransferase E (209 aa).

S-adenosyl-L-methionine is bound by residues glycine 63, tryptophan 65, aspartate 83, aspartate 99, and aspartate 124. Residue lysine 164 is the Proton acceptor of the active site.

Belongs to the class I-like SAM-binding methyltransferase superfamily. RNA methyltransferase RlmE family.

It localises to the cytoplasm. The catalysed reaction is uridine(2552) in 23S rRNA + S-adenosyl-L-methionine = 2'-O-methyluridine(2552) in 23S rRNA + S-adenosyl-L-homocysteine + H(+). Its function is as follows. Specifically methylates the uridine in position 2552 of 23S rRNA at the 2'-O position of the ribose in the fully assembled 50S ribosomal subunit. The protein is Ribosomal RNA large subunit methyltransferase E of Aliivibrio salmonicida (strain LFI1238) (Vibrio salmonicida (strain LFI1238)).